The following is a 765-amino-acid chain: NADPH oxidase 5 (765 aa).

Residues 1-77 (MNTSGDPAQT…LFDSDRSGTI (77 aa)) form an N-terminal lobe of N-terminal regulatory EF domain region. The tract at residues 1-161 (MNTSGDPAQT…SCLRESAISL (161 aa)) is N-terminal regulatory EF domain. Over 1–238 (MNTSGDPAQT…RAYWHNHRSQ (238 aa)) the chain is Cytoplasmic. 2 EF-hand domains span residues 26–56 (RWLRWVTQQFKTIAGEDGEISLQEFKAALHV) and 57–92 (KESFFAERFFALFDSDRSGTITLQELQEALTLLIHG). Ca(2+) is bound by residues Asp42, Glu44, Glu49, Asp70, Asp72, Ser74, Thr76, Glu81, and Asp106. A C-terminal lobe of N-terminal regulatory EF domain region spans residues 78–161 (TLQELQEALT…SCLRESAISL (84 aa)). Positions 93–156 (SPMDKLKFLF…RTVLQSCLRE (64 aa)) constitute an EF-hand 3; atypical; contains an insert of 28 residues domain. At Ile107 the chain carries S-nitrosocysteine. Residues Asp108, Ser138, Ser140, Glu145, Asp178, Asp180, Asn182, and Glu189 each coordinate Ca(2+). Positions 122-141 (GAGAGPHWASSPLGTGSGSI) are disordered. The region spanning 165–200 (KLDQLTLALFESADADGNGAITFEELRDELQRFPGV) is the EF-hand 4 domain. Residues 239–259 (LFCLATYAGLHVLLFGLAASA) form a helical membrane-spanning segment. Ala246 is subject to S-nitrosocysteine. The Extracellular segment spans residues 260–266 (HRDLGAS). The chain crosses the membrane as a helical span at residues 267–289 (VMVAKGCGQCLNFDCSFIAVLML). Residues 290–317 (RRCLTWLRATWLAQVLPLDQNIQFHQLM) are Cytoplasmic-facing. One can recognise a Ferric oxidoreductase domain in the interval 293–440 (LTWLRATWLA…FLEKAIGLAV (148 aa)). Residues 318-338 (GYVVVGLSLVHTVAHTVNFVL) form a helical membrane-spanning segment. Residues 339–362 (QAQAEASPFQFWELLLTTRPGIGW) lie on the Extracellular side of the membrane. The chain crosses the membrane as a helical span at residues 363 to 383 (VHGSASPTGVALLLLLLLMFI). Topologically, residues 384-394 (CSSSCIRRSGH) are cytoplasmic. Residues 395 to 417 (FEVFYWTHLSYLLVWLLLIFHGP) traverse the membrane as a helical segment. C-terminal catalytic dehydrogenase domain regions lie at residues 398–719 (FYWT…GRPD) and 416–737 (GPNF…KVQV). Topologically, residues 418–434 (NFWKWLLVPGILFFLEK) are extracellular. Residues 435 to 455 (AIGLAVSRMAAVCIMEVNLLP) form a helical membrane-spanning segment. Residues 441-577 (SRMAAVCIME…DGPYGTPTRR (137 aa)) enclose the FAD-binding FR-type domain. Over 456 to 583 (SKVTHLLIKR…PTRRIFASEH (128 aa)) the chain is Cytoplasmic. The residue at position 475 (Asp475) is a Phosphoserine; by CaMK2. Position 490 is a phosphothreonine; by PKC/PRKCA (His490). Ile494 carries the phosphothreonine; by CaMK2 and PKC/PRKCA modification. Pro498 carries the post-translational modification Phosphoserine; by CaMK2 and PKC/PRKCA. Asp502 is modified (phosphoserine; by CaMK2). Residue Tyr519 is modified to S-nitrosocysteine. Residues 584–604 (AVLIGAGIGITPFASILQSIM) traverse the membrane as a helical segment. At 605 to 765 (YRHQKRKHTC…FGFRFFQENF (161 aa)) the chain is on the extracellular side. Residue Asp659 is modified to Phosphoserine; by CaMK2. S-nitrosocysteine is present on Leu694.

As to quaternary structure, homooligomer. FAD is required as a cofactor. It depends on Mg(2+) as a cofactor. In terms of processing, phosphorylation at Ser-475 by CaMK2 and at Ser-490, Thr-494 and Ser-498 by PKC/PRKCA positively regulates its catalytic activity. Post-translationally, S-nitrosylation in response to nitric oxide inhibits its catalytic activity. Mainly expressed in pachytene spermatocytes of testis and in lymphocyte-rich areas of spleen and lymph nodes. Also detected in ovary, placenta, pancreas, cardiac fibroblasts. Expressed in B-cells and prostate malignant cells. In terms of tissue distribution, expressed in spleen. Expressed in endothelial cells, pulmonary artery smooth muscle cells and epithelial colorectal adenocarcinoma cells. As to expression, expressed in microvascular endothelial cells (at protein level). Expressed in testis. Expressed in endothelial cells and pulmonary artery smooth muscle cells. Expressed in pulmonary artery smooth muscle cells and epithelial colorectal adenocarcinoma cells. In terms of tissue distribution, expressed in endothelial cells and pulmonary artery smooth muscle cells. As to expression, expressed in microvascular endothelial cells (at protein level).

The protein resides in the endoplasmic reticulum. It is found in the cell membrane. The catalysed reaction is NADPH + 2 O2 = 2 superoxide + NADP(+) + H(+). Activated by calcium which induces conformational changes and interaction between the N-terminal regulatory region and the C-terminal catalytic region. Inhibited by diphenylene iodonium. Calcium-dependent NADPH oxidase that catalyzes the generation of superoxide from molecular oxygen utilizing NADPH as an electron donor. May play a role in cell growth and apoptosis. In terms of biological role, calcium-dependent NADPH oxidase that catalyzes the generation of superoxide from molecular oxygen utilizing NADPH as an electron donor. Involved in endothelial generation of reactive oxygen species (ROS), proliferation and angiogenesis and contributes to endothelial response to thrombin. Regulates redox-dependent processes in lymphocytes and spermatozoa. Its function is as follows. Calcium-dependent NADPH oxidase that catalyzes the generation of superoxide from molecular oxygen utilizing NADPH as an electron donor. Functionally, this isoform lacks calcium-binding domains and was showed to present a NADPH oxidase activity in a calcium-independent manner. May be involved in endothelial generation of reactive oxygen species (ROS), proliferation and angiogenesis and contribute to endothelial response to thrombin. However another study showed an absence of oxidase activity. Subject to rapid degradation. Lacks calcium-dependent NADPH oxidase activity. This chain is NADPH oxidase 5, found in Homo sapiens (Human).